A 904-amino-acid polypeptide reads, in one-letter code: Protein translocase subunit SecA (904 aa).

ATP is bound by residues glutamine 89, glycine 107 to threonine 111, and aspartate 502. The tract at residues valine 872–serine 892 is disordered. 4 residues coordinate Zn(2+): cysteine 888, cysteine 890, cysteine 899, and histidine 900.

This sequence belongs to the SecA family. Part of the essential protein translocation apparatus which comprises SecA, SecYEG and auxiliary proteins SecDF-YajC and YidC. Homodimer. Zn(2+) serves as cofactor.

The protein resides in the cell inner membrane. The protein localises to the cytoplasm. It catalyses the reaction ATP + H2O + cellular proteinSide 1 = ADP + phosphate + cellular proteinSide 2.. Its function is as follows. Part of the Sec protein translocase complex. Interacts with the SecYEG preprotein conducting channel. Has a central role in coupling the hydrolysis of ATP to the transfer of proteins into and across the cell membrane, serving both as a receptor for the preprotein-SecB complex and as an ATP-driven molecular motor driving the stepwise translocation of polypeptide chains across the membrane. The chain is Protein translocase subunit SecA from Rhodobacter capsulatus (Rhodopseudomonas capsulata).